Here is a 188-residue protein sequence, read N- to C-terminus: NEDD8-conjugating enzyme UBC12 (188 aa).

Methionine 1 carries the post-translational modification N-acetylmethionine. The segment covering 1–12 has biased composition (basic residues); the sequence is MLKLRQLQKKKQ. The tract at residues 1-23 is disordered; that stretch reads MLKLRQLQKKKQKENENSSSIQP. The UBC core domain occupies 27–177; that stretch reads AARIRLKRDL…VRLTMSGGSI (151 aa). Cysteine 115 serves as the catalytic Glycyl thioester intermediate.

It belongs to the ubiquitin-conjugating enzyme family. UBC12 subfamily. As to quaternary structure, interacts with DCN1. The acetylation of Met-1 is cotranslational, and not regulatory. The N-acetylmethionine increases affinity for DCUN1D1 by about 2 orders of magnitude and is crucial for NEDD8 transfer to cullins.

The catalysed reaction is [E1 NEDD8-activating enzyme]-S-[NEDD8 protein]-yl-L-cysteine + [E2 NEDD8-conjugating enzyme]-L-cysteine = [E1 NEDD8-activating enzyme]-L-cysteine + [E2 NEDD8-conjugating enzyme]-S-[NEDD8-protein]-yl-L-cysteine.. It participates in protein modification; protein neddylation. In terms of biological role, accepts the ubiquitin-like protein NEDD8/RUB1 from the UBA3-ULA1 E1 complex and catalyzes its covalent attachment to other proteins. The major substrate is CDC53/Cullin. In Saccharomyces cerevisiae (strain ATCC 204508 / S288c) (Baker's yeast), this protein is NEDD8-conjugating enzyme UBC12 (UBC12).